Here is an 888-residue protein sequence, read N- to C-terminus: uncharacterized protein (888 aa).

A signal peptide spans 1 to 20 (MKILKSLVLLVLFIVMPAKA). 6 helical membrane-spanning segments follow: residues 513–533 (IVKAALTLYVIIFGLMFVAGA), 565–585 (TYFFSVFTDGINFFITNVVGA), 611–631 (LLFIELLQIHNGLAFIAIITI), 649–669 (VIAFIGITVMISLAPFFIILM), 682–702 (ISTLLSYVVQPTILLIFFLLI), and 781–801 (LLFYSYCLMSYGLVTFVNIVV).

This sequence belongs to the TrbL/VirB6 family.

Its subcellular location is the cell membrane. This is an uncharacterized protein from Rickettsia prowazekii (strain Madrid E).